The primary structure comprises 204 residues: Oxidoreductase iacF (204 aa).

Belongs to the oxidoreductase OpS7 family.

It participates in secondary metabolite biosynthesis. Its function is as follows. Oxidoreductase; part of the gene cluster that mediates the biosynthesis of iso-A82775C, a enylepoxycyclohexane and biosynthetic precursor of the chloropestolide anticancer natural products. Within the cluster, the prenyltransferase iacE prenylates siccayne to generate pestalodiol E, using dimethylallyl diphosphate (DMAPP) as cosubstrate. The probable oxidoreductase iacF is then involved in the epoxidation of pestalodiol F to pestalodiol F, which is further converted to pestalofone A by the short-chain dehydrogenase/reductase iacG. Iso-A82775C is subsequently generated from pestalofone A by the short-chain dehydrogenase/reductase iacC. Iso-A82775C is further condensed with maldoxin via a Diels-Alder reaction to produce the anticancer natural products chloropestolides A to E. The chain is Oxidoreductase iacF from Pestalotiopsis fici (strain W106-1 / CGMCC3.15140).